The primary structure comprises 140 residues: Putative pre-16S rRNA nuclease (140 aa).

It belongs to the YqgF nuclease family.

It is found in the cytoplasm. Could be a nuclease involved in processing of the 5'-end of pre-16S rRNA. The protein is Putative pre-16S rRNA nuclease of Parabacteroides distasonis (strain ATCC 8503 / DSM 20701 / CIP 104284 / JCM 5825 / NCTC 11152).